The sequence spans 142 residues: Glia maturation factor beta (142 aa).

Residue serine 2 is modified to N-acetylserine. Positions 4 to 139 constitute an ADF-H domain; that stretch reads SLVVCDVAED…TEEWLREKLG (136 aa).

The protein belongs to the actin-binding proteins ADF family. GMF subfamily. Post-translationally, phosphorylated; stimulated by phorbol ester.

Its function is as follows. This protein causes differentiation of brain cells, stimulation of neural regeneration, and inhibition of proliferation of tumor cells. This is Glia maturation factor beta (Gmfb) from Rattus norvegicus (Rat).